We begin with the raw amino-acid sequence, 51 residues long: Insulin (51 aa).

Disulfide bonds link cysteine 8–cysteine 37, cysteine 20–cysteine 50, and cysteine 36–cysteine 41.

The protein belongs to the insulin family. As to quaternary structure, heterodimer of a B chain and an A chain linked by two disulfide bonds.

The protein resides in the secreted. Functionally, insulin decreases blood glucose concentration. It increases cell permeability to monosaccharides, amino acids and fatty acids. It accelerates glycolysis, the pentose phosphate cycle, and glycogen synthesis in liver. In Seriola quinqueradiata (Five-ray yellowtail), this protein is Insulin.